The sequence spans 628 residues: Set1/Ash2 histone methyltransferase complex subunit ASH2 (628 aa).

Met-1 bears the N-acetylmethionine mark. Positions 1–18 (MAAAGAGPGQEAGAGPGP) are enriched in gly residues. Residues 1–66 (MAAAGAGPGQ…SGEAEGGEAN (66 aa)) form a PHD-type; atypical zinc finger. The tract at residues 1–107 (MAAAGAGPGQ…QAGSVDEENG (107 aa)) is disordered. The segment covering 36-65 (AAGAAAPPGEGISAAPTVEPSSGEAEGGEA) has biased composition (low complexity). The segment at 67–177 (LVDVSGGLET…MCLSALANLT (111 aa)) is DNA-binding. Ser-101 carries the phosphoserine modification. The C4-type zinc finger occupies 117 to 150 (CGICTKWFTADTFGIDTSSCLPFMTNYSFHCNVC). Over residues 235 to 252 (LVKEHPDPGSKDPEEDYP) the composition is skewed to basic and acidic residues. The tract at residues 235 to 331 (LVKEHPDPGS…AQRLPPHGYP (97 aa)) is disordered. Positions 270 to 282 (NQKQSSAVSTSGN) are enriched in polar residues. The segment covering 283-295 (LNGGIAAGSSGKG) has biased composition (gly residues). Position 296 is an asymmetric dimethylarginine; by PRMT1 and PRMT5 (Arg-296). At Ser-316 the chain carries Phosphoserine. Residues 316 to 628 (SDPLFSAQRL…DGRRSPPWEP (313 aa)) form an interaction with RBBP5 region. The 224-residue stretch at 360 to 583 (LDCWAGKPIP…VSINFGPCFK (224 aa)) folds into the B30.2/SPRY domain.

Interacts with HCFC1. Core component of several methyltransferase-containing complexes including MLL1/MLL, MLL2/3 (also named ASCOM complex) and MLL4/WBP7. Each complex is at least composed of ASH2L, RBBP5, WDR5, DPY30, one or more specific histone methyltransferases (KMT2A/MLL1, KMT2D/MLL2, KMT2C/MLL3 and KMT2B/MLL4), and the facultative components PAGR1, BACC1, CHD8, E2F6, HCFC1, HCFC2, HSP70, INO80C, KDM6A, KANSL1, LAS1L, MAX, MCRS1, MEN1, MGA, KAT8/MOF, NCOA6, PAXIP1/PTIP, PELP1, PHF20, PRP31, RING2, RUVB1/TIP49A, RUVB2/TIP49B, SENP3, TAF1, TAF4, TAF6, TAF7, TAF9, TEX10 and alpha- and beta-tubulin. Component of the SET1 complex, at least composed of the catalytic subunit (SETD1A or SETD1B), WDR5, WDR82, RBBP5, ASH2L/ASH2, CXXC1/CFP1, HCFC1 and DPY30. Found in a complex with RBBP5, ASH2L, DPY30, KMT2A, KMT2D and WDR5. Component of a histone methylation complex composed of at least ZNF335, RBBP5, ASH2L and WDR5; the complex may have histone H3-specific methyltransferase activity, however does not have specificity for 'Lys-4' of histone H3. Within the complex, interacts with ZNF335. Interacts with RBBP5. Components of this complex may associate with components of a nuclear receptor-mediated transcription complex to form a complex at least composed of ZNF335, HCFC1, CCAR2, EMSY, MKI67, RBBP5, ASH2L and WDR5. Within this complex also interacts with CCAR2 and EMSY. Interacts with DPY30. Interacts with SETD1A and SETD1B. In terms of processing, both monomethylated and dimethylated on arginine residues in the C-terminus. Arg-296 is the major site. Methylation is not required for nuclear localization, nor for MLL complex integrity or maintenance of global histone H3K4me3 levels. In terms of tissue distribution, ubiquitously expressed. Predominantly expressed in adult heart and testis and fetal lung and liver, with barely detectable expression in adult lung, liver, kidney, prostate, and peripheral leukocytes.

The protein localises to the nucleus. Transcriptional regulator. Component or associated component of some histone methyltransferase complexes which regulates transcription through recruitment of those complexes to gene promoters. Component of the Set1/Ash2 histone methyltransferase (HMT) complex, a complex that specifically methylates 'Lys-4' of histone H3, but not if the neighboring 'Lys-9' residue is already methylated. As part of the MLL1/MLL complex it is involved in methylation and dimethylation at 'Lys-4' of histone H3. May play a role in hematopoiesis. In association with RBBP5 and WDR5, stimulates the histone methyltransferase activities of KMT2A, KMT2B, KMT2C, KMT2D, SETD1A and SETD1B. This is Set1/Ash2 histone methyltransferase complex subunit ASH2 (ASH2L) from Homo sapiens (Human).